A 313-amino-acid polypeptide reads, in one-letter code: Protoheme IX farnesyltransferase (313 aa).

8 helical membrane passes run 34–54 (VIEL…RGTV), 56–76 (PLLI…ANTL), 105–125 (HALI…WSTT), 128–148 (LSAH…TLLL), 152–172 (TSQN…IGWS), 173–193 (AVTG…FFWT), 237–257 (VLAT…VAIL), and 291–311 (YLAV…PTLL).

This sequence belongs to the UbiA prenyltransferase family. Protoheme IX farnesyltransferase subfamily.

The protein localises to the cell membrane. It carries out the reaction heme b + (2E,6E)-farnesyl diphosphate + H2O = Fe(II)-heme o + diphosphate. Its pathway is porphyrin-containing compound metabolism; heme O biosynthesis; heme O from protoheme: step 1/1. Functionally, converts heme B (protoheme IX) to heme O by substitution of the vinyl group on carbon 2 of heme B porphyrin ring with a hydroxyethyl farnesyl side group. The protein is Protoheme IX farnesyltransferase of Mycolicibacterium gilvum (strain PYR-GCK) (Mycobacterium gilvum (strain PYR-GCK)).